The following is a 140-amino-acid chain: Ig heavy chain V region 93G7 (140 aa).

The signal sequence occupies residues 1–19 (MGWSFIFLFLLSVTAGVHS). The 120-residue stretch at 20 to 139 (EVQLQQSGAE…WGQGTPLTVS (120 aa)) folds into the Ig-like domain.

The sequence is that of Ig heavy chain V region 93G7 from Mus musculus (Mouse).